Reading from the N-terminus, the 306-residue chain is MVRRIGVLMGGLSAEREVSLRSGRAVCAALESRGYEVVPIDVNRDVARTVRETGIELAFIALHGPLGEDGAVQGLLEVLGIPYTGSGVLASALAMDKIATKKILAHAGLPVPEYRELEAGDADSARAVVAELGLPVVVKAPTQGSSIGVYIVEREEDLEARITDAVAYGGTRVLVEKFIAGPELTAAVLGNREPRVLPLIEIVSATGKYDYESKYTPGLSDHLIPPRVPREVQERVSDLALRAYRALGCRGFARVDLIVSGNEAFILEINTIPGLTDVSLFPDAARAAGMSFPDLVEHLVRLAQER.

Residues 101 to 301 form the ATP-grasp domain; the sequence is KKILAHAGLP…FPDLVEHLVR (201 aa). Residue 129 to 185 participates in ATP binding; sequence VAELGLPVVVKAPTQGSSIGVYIVEREEDLEARITDAVAYGGTRVLVEKFIAGPELT. Positions 256, 268, and 270 each coordinate Mg(2+).

This sequence belongs to the D-alanine--D-alanine ligase family. The cofactor is Mg(2+). Mn(2+) is required as a cofactor.

Its subcellular location is the cytoplasm. The catalysed reaction is 2 D-alanine + ATP = D-alanyl-D-alanine + ADP + phosphate + H(+). The protein operates within cell wall biogenesis; peptidoglycan biosynthesis. In terms of biological role, cell wall formation. The protein is D-alanine--D-alanine ligase of Desulforudis audaxviator (strain MP104C).